We begin with the raw amino-acid sequence, 158 residues long: Retinoic acid receptor beta (158 aa).

A compositionally biased stretch (low complexity) spans 1-18 (RHSAQSIETQSTSSEELV). A disordered region spans residues 1-24 (RHSAQSIETQSTSSEELVPSPPSP). A DNA-binding region (nuclear receptor) is located at residues 31–106 (YKPCFVCQDK…VGMSKESVRN (76 aa)). NR C4-type zinc fingers lie at residues 34–54 (CFVC…CEGC) and 70–94 (CHRD…LQRC). One can recognise an NR LBD domain in the interval 129 to 158 (ELDDLTEKIRKAHQETFPSLCQLGKYTTNS).

It belongs to the nuclear hormone receptor family. NR1 subfamily. Heterodimer; with a RXR molecule. Binds DNA preferentially as a RAR/RXR heterodimer.

The protein resides in the nucleus. Functionally, receptor for retinoic acid. Retinoic acid receptors bind as heterodimers to their target response elements in response to their ligands, all-trans or 9-cis retinoic acid, and regulate gene expression in various biological processes. The RAR/RXR heterodimers bind to the retinoic acid response elements (RARE) composed of tandem 5'-AGGTCA-3' sites known as DR1-DR5. The protein is Retinoic acid receptor beta (RARB) of Notophthalmus viridescens (Eastern newt).